A 2671-amino-acid chain; its full sequence is MSEMSSFLHIGDIVSLYAEGSVNGFISTLGLVDDRCVVEPAAGDLDNPPKKFRDCLFKVCPMNRYSAQKQYWKAKQTKQDKEKIADVVLLQKLQHAAQMEQKQNDTENKKVHGDVVKYGSVIQLLHMKSNKYLTVNKRLPALLEKNAMRVTLDATGNEGSWLFIQPFWKLRSNGDNVVVGDKVILNPVNAGQPLHASNYELSDNAGCKEVNSVNCNTSWKINLFMQFRDHLEEVLKGGDVVRLFHAEQEKFLTCDEYKGKLQVFLRTTLRQSATSATSSNALWEVEVVHHDPCRGGAGHWNGLYRFKHLATGNYLAAEENPSYKGDASDPKAAGMGAQGRTGRRNAGEKIKYCLVAVPHGNDIASLFELDPTTLQKTDSFVPRNSYVRLRHLCTNTWIQSTNVPIDIEEERPIRLMLGTCPTKEDKEAFAIVSVPVSEIRDLDFANDASSMLASAVEKLNEGFISQNDRRFVIQLLEDLVFFVSDVPNNGQNVLDIMVTKPNRERQKLMREQNILKQVFGILKAPFREKGGEGPLVRLEELSDQKNAPYQHMFRLCYRVLRHSQEDYRKNQEHIAKQFGMMQSQIGYDILAEDTITALLHNNRKLLEKHITKTEVETFVSLVRKNREPRFLDYLSDLCVSNHIAIPVTQELICKCVLDPKNSDILIRTELRPVKEMAQSHEYLSIEYSEEEVWLTWTDKNNEHHEKSVRQLAQEARAGNAHDENVLSYYRYQLKLFARMCLDRQYLAIDEISQQLGVDLIFLCMADEMLPFDLRASFCHLMLHVHVDRDPQELVTPVKFARLWTEIPTAITIKDYDSNLNASRDDKKNKFANTMEFVEDYLNNVVSEAVPFANEEKNKLTFEVVSLAHNLIYFGFYSFSELLRLTRTLLGIIDCVQGPPAMLQAYEDPGGKNVRRSIQGVGHMMSTMVLSRKQSVFSAPSLSAGASAAEPLDRSKFEENEDIVVMETKLKILEILQFILNVRLDYRISYLLSVFKKEFVEVFPMQDSGADGTAPAFDSTTANMNLDRIGEQAEAMFGVGKTSSMLEVDDEGGRMFLRVLIHLTMHDYAPLVSGALQLLFKHFSQRQEAMHTFKQVQLLISAQDVENYKVIKSELDRLRTMVEKSELWVDKKGSGKGEEVEAGAAKDKKERPTDEEGFLHPPGEKSSENYQIVKGILERLNKMCGVGEQMRKKQQRLLKNMDAHKVMLDLLQIPYDKGDAKMMEILRYTHQFLQKFCAGNPGNQALLHKHLHLFLTPGLLEAETMQHIFLNNYQLCSEISEPVLQHFVHLLATHGRHVQYLDFLHTVIKAEGKYVKKCQDMIMTELTNAGDDVVVFYNDKASLAHLLDMMKAARDGVEDHSPLMYHISLVDLLAACAEGKNVYTEIKCTSLLPLEDVVSVVTHEDCITEVKMAYVNFVNHCYVDTEVEMKEIYTSNHIWTLFENFTLDMARVCSKREKRVADPTLEKYVLSVVLDTINAFFSSPFSENSTSLQTHQTIVVQLLQSTTRLLECPWLQQQHKGSVEACIRTLAMVAKGRAILLPMDLDAHISSMLSSGASCAAAAQRNASSYKATTRAFPRVTPTANQWDYKNIIEKLQDIITALEERLKPLVQAELSVLVDVLHWPELLFLEGSEAYQRCESGGFLSKLIQHTKDLMESEEKLCIKVLRTLQQMLLKKTKYGDRGNQLRKMLLQNYLQNRKSTSRGDLPDPIGTGLDPDWSAIAATQCRLDKEGATKLVCDLITSTKNEKIFQESIGLAIHLLDGGNTEIQKSFHNLMMSDKKSERFFKVLHDRMKRAQQETKSTVAVNMNDLGSQPHEDREPVDPTTKGRVASFSIPGSSSRYSLGPSLRRGHEVSERVQSSEMGTSVLIMQPILRFLQLLCENHNRDLQNFLRCQNNKTNYNLVCETLQFLDIMCGSTTGGLGLLGLYINEDNVGLVIQTLETLTEYCQGPCHENQTCIVTHESNGIDIITALILNDISPLCKYRMDLVLQLKDNASKLLLALMESRHDSENAERILISLRPQELVDVIKKAYLQEEERENSEVSPREVGHNIYILALQLSRHNKQLQHLLKPVKRIQEEEAEGISSMLSLNNKQLSQMLKSSAPAQEEEEDPLAYYENHTSQIEIVRQDRSMEQIVFPVPGICQFLTEETKHRLFTTTEQDEQGSKVSDFFDQSSFLHNEMEWQRKLRSMPLIYWFSRRMTLWGSISFNLAVFINIIIAFFYPYMEGASTGVLDSPLISLLFWILICFSIAALFTKRYSIRPLIVALILRSIYYLGIGPTLNILGALNLTNKIVFVVSFVGNRGTFIRGYKAMVMDMEFLYHVGYILTSVLGLFAHELFYSILLFDLIYREETLFNVIKSVTRNGRSILLTALLALILVYLFSIVGFLFLKDDFILEVDRLPNNHSTASPLGMPHGAAAFVDTCSGDKMDCVSGLSVPEVLEEDRELDSTERACDTLLMCIVTVMNHGLRNGGGVGDILRKPSKDESLFPARVVYDLLFFFIVIIIVLNLIFGVIIDTFADLRSEKQKKEEILKTTCFICGLERDKFDNKTVSFEEHIKLEHNMWNYLYFIVLVRVKNKTDYTGPESYVAQMIKNKNLDWFPRMRAMSLVSNEGEGEQNEIRILQDKLNSTMKLVSHLTAQLNELKEQMTEQRKRRQRLGFVDVQNCISR.

The Cytoplasmic portion of the chain corresponds to 1–2202; sequence MSEMSSFLHI…LIYWFSRRMT (2202 aa). MIR domains lie at 113–173, 174–224, 232–288, 295–372, and 378–434; these read GDVV…LRSN, GDNV…INLF, EEVL…VEVV, GGAG…LDPT, and DSFV…IVSV. 1D-myo-inositol 1,4,5-trisphosphate-binding residues include Arg266, Thr268, Leu269, and Arg270. The segment at 322-342 is disordered; that stretch reads SYKGDASDPKAAGMGAQGRTG. 1D-myo-inositol 1,4,5-trisphosphate contacts are provided by Arg503, Lys507, Arg510, Tyr567, Arg568, and Lys569. Arg743 lines the Ca(2+) pocket. Residues Ser916 and Ser934 each carry the phosphoserine modification. Glu1122 and Glu1125 together coordinate Ca(2+). Disordered stretches follow at residues 1132 to 1163 and 1809 to 1848; these read GSGK…PPGE and NDLG…GPSL. Phosphoserine occurs at positions 1813, 1832, and 1834. Ca(2+) contacts are provided by Glu1882 and Glu1946. ATP contacts are provided by Ala1996, Glu2149, and Lys2152. A helical membrane pass occupies residues 2203-2223; that stretch reads LWGSISFNLAVFINIIIAFFY. Over 2224–2235 the chain is Extracellular; sequence PYMEGASTGVLD. Residues 2236 to 2256 form a helical membrane-spanning segment; sequence SPLISLLFWILICFSIAALFT. Residues 2257–2264 are Cytoplasmic-facing; that stretch reads KRYSIRPL. Residues 2265–2285 form a helical membrane-spanning segment; sequence IVALILRSIYYLGIGPTLNIL. Residues 2286-2325 lie on the Extracellular side of the membrane; that stretch reads GALNLTNKIVFVVSFVGNRGTFIRGYKAMVMDMEFLYHVG. A helical transmembrane segment spans residues 2326–2346; sequence YILTSVLGLFAHELFYSILLF. The Cytoplasmic portion of the chain corresponds to 2347-2368; sequence DLIYREETLFNVIKSVTRNGRS. The helical transmembrane segment at 2369 to 2389 threads the bilayer; it reads ILLTALLALILVYLFSIVGFL. Over 2390-2496 the chain is Extracellular; the sequence is FLKDDFILEV…ESLFPARVVY (107 aa). Cys2455 and Cys2461 are joined by a disulfide. A helical transmembrane segment spans residues 2497 to 2517; it reads DLLFFFIVIIIVLNLIFGVII. Topologically, residues 2518 to 2671 are cytoplasmic; it reads DTFADLRSEK…FVDVQNCISR (154 aa). Cys2538 and Phe2539 together coordinate ATP. Position 2538 (Cys2538) interacts with Zn(2+). The Zn(2+) site is built by Cys2541 and His2558. Positions 2560, 2563, 2564, and 2565 each coordinate ATP. His2563 contacts Zn(2+). Residue Thr2581 coordinates Ca(2+). A phosphoserine mark is found at Ser2609 and Ser2670.

This sequence belongs to the InsP3 receptor family. As to quaternary structure, homotetramer. Homodimer. Interacts with TRPC1, TRPC3 and TRPC4. Interacts with TRPV4. Interacts with SIGMAR1. Interacts with PML and AKT1. Interacts with IRAG2 (via coiled-coil domain). Interacts with CABP1. Interacts with TMBIM4/LFG4. Interacts with CEMIP. Interacts with TESPA1. Interacts with TMEM203. Interacts with BOK; regulates ITPR3 expression. Interacts with BCL2L10. Interacts with CHGA and CHGB. Phosphorylated by AKT1 on serine and/or threonine residues. As to expression, expressed in intestinal crypt and villus epithelial cells.

It is found in the endoplasmic reticulum membrane. The protein resides in the cytoplasmic vesicle. It localises to the secretory vesicle membrane. The enzyme catalyses Ca(2+)(in) = Ca(2+)(out). With respect to regulation, inositol 1,4,5-trisphosphate-gated calcium channel is regulated by cytosolic calcium in a biphasic manner. At low concentrations, cytosolic calcium binds at a high-affinity juxtamembrane domain (JD) calcium binding site, allowing ITPR3 to activate by escaping a low-energy resting state through an ensemble of preactivated states. At high cytosolic calcium concentrations, ITPR3 preferentially enters an inhibited state stabilized by calcium binding at a second, low-affinity cytoplasmic domain (CD) calcium binding site. Inositol 1,4,5-trisphosphate-gated calcium channel that, upon 1D-myo-inositol 1,4,5-trisphosphate binding, transports calcium from the endoplasmic reticulum lumen to cytoplasm, thus releasing the intracellular calcium and therefore participates in cellular calcium ion homeostasis. 1D-myo-inositol 1,4,5-trisphosphate binds to the ligand-free channel without altering its global conformation, yielding the low-energy resting state, then progresses through resting-to preactivated transitions to the higher energy preactivated state, which increases affinity for calcium, promoting binding of the low basal cytosolic calcium at the juxtamembrane domain (JD) site, favoring the transition through the ensemble of high-energy intermediate states along the trajectory to the fully-open activated state. Upon opening, releases calcium in the cytosol where it can bind to the low-affinity cytoplasmic domain (CD) site and stabilizes the inhibited state to terminate calcium release. In Homo sapiens (Human), this protein is Inositol 1,4,5-trisphosphate-gated calcium channel ITPR3.